Here is a 394-residue protein sequence, read N- to C-terminus: Phosphopentomutase (394 aa).

Residues aspartate 15, aspartate 288, histidine 293, aspartate 329, histidine 330, and histidine 341 each coordinate Mn(2+).

Belongs to the phosphopentomutase family. It depends on Mn(2+) as a cofactor.

The protein resides in the cytoplasm. The catalysed reaction is 2-deoxy-alpha-D-ribose 1-phosphate = 2-deoxy-D-ribose 5-phosphate. It catalyses the reaction alpha-D-ribose 1-phosphate = D-ribose 5-phosphate. The protein operates within carbohydrate degradation; 2-deoxy-D-ribose 1-phosphate degradation; D-glyceraldehyde 3-phosphate and acetaldehyde from 2-deoxy-alpha-D-ribose 1-phosphate: step 1/2. Isomerase that catalyzes the conversion of deoxy-ribose 1-phosphate (dRib-1-P) and ribose 1-phosphate (Rib-1-P) to deoxy-ribose 5-phosphate (dRib-5-P) and ribose 5-phosphate (Rib-5-P), respectively. This Bacillus pumilus (strain SAFR-032) protein is Phosphopentomutase.